Here is an 88-residue protein sequence, read N- to C-terminus: Conotoxin Ca8.3 (88 aa).

The first 21 residues, 1-21 (MMLKMGAMFVLLLLFILPSSQ), serve as a signal peptide directing secretion. Positions 22–46 (QEGDVQARKTHLKSGFYGTLAMSTR) are excised as a propeptide.

Belongs to the conotoxin S superfamily. Contains 5 disulfide bonds. Expressed by the venom duct.

It localises to the secreted. The protein is Conotoxin Ca8.3 of Conus caracteristicus (Characteristic cone).